Here is a 177-residue protein sequence, read N- to C-terminus: MERKQGEVDHLERSRPLTDKERVMIQDSWAKVYQNCDDAGVAILVRLFVNFPSSKQYFSQFKHIEDAEELEKSSQLRKHARRVMNAINTLVESLDNSDKVSSVLNAVGKAHAIRHKVDPVYFKILSGVILEVLGEAYPQVMTAEVASAWTNLLAILCCSIKAVYEELGWPHLSNSTS.

One can recognise a Globin domain in the interval Pro16 to Glu165. His79 and His111 together coordinate heme b.

This sequence belongs to the globin family. Monomeric.

It localises to the cytoplasm. The protein resides in the nucleus. The catalysed reaction is Fe(II)-heme b-[protein] + nitric oxide + O2 = Fe(III)-heme b-[protein] + nitrate. The enzyme catalyses Fe(III)-heme b-[protein] + nitric oxide + H2O = Fe(II)-heme b-[protein] + nitrite + 2 H(+). It carries out the reaction 2 superoxide + 2 H(+) = H2O2 + O2. It catalyses the reaction H2O2 + AH2 = A + 2 H2O. Its function is as follows. Probable multifunctional globin with a hexacoordinated heme iron required for the catalysis of various reactions depending on redox condition of the cell as well as oxygen availability. Has a nitric oxide dioxygenase (NOD) activity and is most probably involved in cell-mediated and oxygen-dependent nitric oxide consumption. Under normoxic conditions functions as a nitric oxide dioxygenase (NOD) but under hypoxic conditions the globin may switch its function to that of a nitrite (NO2) reductase (NiR), generating nitric oxide. Could also have peroxidase and superoxide dismutase activities, detoxifying reactive oxygen species and protecting cells against oxidative stress. Also binds dioxygen with low affinity and could function as an oxygen sensor but has probably no function as a respiratory oxygen carrier. The protein is Cytoglobin-1 of Oryzias latipes (Japanese rice fish).